The sequence spans 1098 residues: Trehalose synthase complex regulatory subunit TSL1 (1098 aa).

A phosphoserine mark is found at Ser-49, Ser-53, Ser-56, Ser-71, Ser-77, Ser-135, Ser-147, and Ser-161. 3 disordered regions span residues 59 to 86 (APAPEQGVPPAISRSATRSPSAFNRASS), 129 to 168 (SVERFFSPSSNIPTDRIASPIQHEHDSGSRIASPIQQQQQ), and 192 to 244 (SQTS…PSIK). A compositionally biased stretch (polar residues) spans 72-86 (RSATRSPSAFNRASS). Tandem repeats lie at residues 144–150 (RIASPIQ) and 158–164 (RIASPIQ). The interval 144–164 (RIASPIQHEHDSGSRIASPIQ) is 2 X 7 AA repeats of R-I-A-S-P-I-Q. A compositionally biased stretch (polar residues) spans 213–227 (RPTSAATSLVNRTKQ). Over residues 228–242 (GSASSGSSGSSAPPS) the composition is skewed to low complexity. Position 229 is a phosphoserine (Ser-229). Phosphothreonine is present on Thr-251. Residues 274 to 297 (ADISSSETSSQHNESDPDDLTTAP) are disordered. A Phosphoserine modification is found at Ser-303. The tract at residues 320–812 (GGYSNKSKLK…FNQEGSKIFK (493 aa)) is TPS complex domain. Thr-815 is modified (phosphothreonine). Residues 1000–1027 (SSGQITNIQTPSQQNPSDQEQQPPASPT) are disordered.

It in the C-terminal section; belongs to the glycosyltransferase 20 family. The trehalose synthase complex is composed of the two catalytic subunits TPS1 and TPS2, and at least one of the two regulatory subunits TPS3 or TSL1.

The protein localises to the cytoplasm. Its function is as follows. Regulatory subunit of the trehalose synthase complex that catalyzes the production of trehalose from glucose-6-phosphate and UDP-glucose in a two step process. May stabilize the trehalose synthase complex, and confer sensitivity to physiological concentrations of phosphate and to fructose 6-phosphate. This Saccharomyces cerevisiae (strain ATCC 204508 / S288c) (Baker's yeast) protein is Trehalose synthase complex regulatory subunit TSL1 (TSL1).